The sequence spans 259 residues: GTP cyclohydrolase FolE2 (259 aa).

Belongs to the GTP cyclohydrolase IV family.

It catalyses the reaction GTP + H2O = 7,8-dihydroneopterin 3'-triphosphate + formate + H(+). Its pathway is cofactor biosynthesis; 7,8-dihydroneopterin triphosphate biosynthesis; 7,8-dihydroneopterin triphosphate from GTP: step 1/1. Converts GTP to 7,8-dihydroneopterin triphosphate. The polypeptide is GTP cyclohydrolase FolE2 (Thermotoga neapolitana (strain ATCC 49049 / DSM 4359 / NBRC 107923 / NS-E)).